Here is a 443-residue protein sequence, read N- to C-terminus: Threonine/serine transporter TdcC (443 aa).

11 consecutive transmembrane segments (helical) span residues 22 to 42 (TTWT…FFPI), 44 to 64 (AGFG…PIAF), 97 to 117 (GVVI…IYGV), 140 to 160 (FVAL…KDLM), 163 to 183 (VMSY…LSLI), 207 to 227 (ILVT…FSPI), 259 to 279 (ASML…FTLS), 319 to 339 (ASII…LGTL), 366 to 386 (ISMI…PNIL), 389 to 409 (IEAM…MYAI), and 423 to 443 (DNVF…YKLF).

Belongs to the amino acid/polyamine transporter 2 family. SdaC/TdcC subfamily.

It localises to the cell inner membrane. The catalysed reaction is L-threonine(in) + H(+)(in) = L-threonine(out) + H(+)(out). The enzyme catalyses L-serine(in) + H(+)(in) = L-serine(out) + H(+)(out). Functionally, involved in the import of threonine and serine into the cell, with the concomitant import of a proton (symport system). The protein is Threonine/serine transporter TdcC of Salmonella newport (strain SL254).